Reading from the N-terminus, the 521-residue chain is Medium/long-chain-fatty-acid--[acyl-carrier-protein] ligase MbtM (521 aa).

The protein belongs to the ATP-dependent AMP-binding enzyme family.

It catalyses the reaction a long-chain fatty acid + holo-[ACP] + ATP = a long-chain fatty acyl-[ACP] + AMP + diphosphate. It carries out the reaction a medium-chain fatty acid + holo-[ACP] + ATP = a medium-chain fatty acyl-[ACP] + AMP + diphosphate. It participates in siderophore biosynthesis; mycobactin biosynthesis. Functionally, activates lipidic moieties required for mycobactin biosynthesis. Converts medium- to long-chain aliphatic fatty acids into acyl adenylate, which is further transferred on to the phosphopantetheine arm of the carrier protein MbtL. This is Medium/long-chain-fatty-acid--[acyl-carrier-protein] ligase MbtM (mbtM) from Mycobacterium bovis (strain ATCC BAA-935 / AF2122/97).